The following is a 374-amino-acid chain: Protein FAM199X (374 aa).

The disordered stretch occupies residues 238–343 (YIREHSPRQR…QLKEQRQARK (106 aa)). The segment covering 261 to 295 (SNGSTSGVSAHSSSNASMVSSTSSSTASTGSNSST) has biased composition (low complexity). Residues 315-334 (DSKKRSKQRKMQQKALRKRQ) show a composition bias toward basic residues. A coiled-coil region spans residues 317 to 346 (KKRSKQRKMQQKALRKRQLKEQRQARKERL).

Belongs to the FAM199 family.

In Danio rerio (Zebrafish), this protein is Protein FAM199X (fam199x).